Here is a 520-residue protein sequence, read N- to C-terminus: Amine oxidase [flavin-containing] B (520 aa).

N-acetylserine is present on Ser2. At 2-489 the chain is on the cytoplasmic side; the sequence is SNKCDVIVVG…TFLERHLPSV (488 aa). At Lys52 the chain carries N6-acetyllysine. Cys397 carries the post-translational modification S-8alpha-FAD cysteine. A helical; Anchor for type IV membrane protein transmembrane segment spans residues 490–516; sequence PGLLKLLGLTTILSATALGFLAHKKGL. Topologically, residues 517–520 are mitochondrial intermembrane; sequence FVRF.

This sequence belongs to the flavin monoamine oxidase family. In terms of assembly, monomer, homo- or heterodimer (containing two subunits of similar size). Each subunit contains a covalently bound flavin. Enzymatically active as monomer. It depends on FAD as a cofactor.

The protein resides in the mitochondrion outer membrane. It carries out the reaction a secondary aliphatic amine + O2 + H2O = a primary amine + an aldehyde + H2O2. It catalyses the reaction (R)-adrenaline + O2 + H2O = (R)-3,4-dihydroxymandelaldehyde + methylamine + H2O2. The catalysed reaction is a primary methyl amine + O2 + H2O = an aldehyde + H2O2 + NH4(+). The enzyme catalyses dopamine + O2 + H2O = 3,4-dihydroxyphenylacetaldehyde + H2O2 + NH4(+). It carries out the reaction tyramine + O2 + H2O = (4-hydroxyphenyl)acetaldehyde + H2O2 + NH4(+). It catalyses the reaction (R)-noradrenaline + O2 + H2O = (R)-3,4-dihydroxymandelaldehyde + H2O2 + NH4(+). The catalysed reaction is benzylamine + O2 + H2O = benzaldehyde + H2O2 + NH4(+). The enzyme catalyses 2-phenylethylamine + O2 + H2O = 2-phenylacetaldehyde + H2O2 + NH4(+). It carries out the reaction N-acetylputrescine + O2 + H2O = 4-acetamidobutanal + H2O2 + NH4(+). Its function is as follows. Catalyzes the oxidative deamination of primary and some secondary amines such as neurotransmitters, and exogenous amines including the tertiary amine, neurotoxin 1-methyl-4-phenyl-1,2,3,6-tetrahydropyridine (MPTP), with concomitant reduction of oxygen to hydrogen peroxide and participates in the metabolism of neuroactive and vasoactive amines in the central nervous system and peripheral tissues. Preferentially degrades benzylamine and phenylethylamine. This is Amine oxidase [flavin-containing] B from Rattus norvegicus (Rat).